Consider the following 124-residue polypeptide: Small ribosomal subunit protein uS12 (124 aa).

Disordered regions lie at residues 9–32 (RKGR…QRRG) and 105–124 (QGVK…KEKS). Over residues 108-118 (KNRKQARSRYG) the composition is skewed to basic residues.

This sequence belongs to the universal ribosomal protein uS12 family. Part of the 30S ribosomal subunit. Contacts proteins S8 and S17. May interact with IF1 in the 30S initiation complex.

Functionally, with S4 and S5 plays an important role in translational accuracy. Its function is as follows. Interacts with and stabilizes bases of the 16S rRNA that are involved in tRNA selection in the A site and with the mRNA backbone. Located at the interface of the 30S and 50S subunits, it traverses the body of the 30S subunit contacting proteins on the other side and probably holding the rRNA structure together. The combined cluster of proteins S8, S12 and S17 appears to hold together the shoulder and platform of the 30S subunit. This Nocardia farcinica (strain IFM 10152) protein is Small ribosomal subunit protein uS12.